Here is a 498-residue protein sequence, read N- to C-terminus: ATP synthase subunit beta, chloroplastic (498 aa).

172–179 (GGAGVGKT) is a binding site for ATP.

Belongs to the ATPase alpha/beta chains family. F-type ATPases have 2 components, CF(1) - the catalytic core - and CF(0) - the membrane proton channel. CF(1) has five subunits: alpha(3), beta(3), gamma(1), delta(1), epsilon(1). CF(0) has four main subunits: a(1), b(1), b'(1) and c(9-12).

It localises to the plastid. The protein resides in the chloroplast thylakoid membrane. It catalyses the reaction ATP + H2O + 4 H(+)(in) = ADP + phosphate + 5 H(+)(out). Its function is as follows. Produces ATP from ADP in the presence of a proton gradient across the membrane. The catalytic sites are hosted primarily by the beta subunits. The chain is ATP synthase subunit beta, chloroplastic from Nicotiana rustica (Aztec tobacco).